The chain runs to 117 residues: Large ribosomal subunit protein bL19 (117 aa).

The protein belongs to the bacterial ribosomal protein bL19 family.

Its function is as follows. This protein is located at the 30S-50S ribosomal subunit interface and may play a role in the structure and function of the aminoacyl-tRNA binding site. The sequence is that of Large ribosomal subunit protein bL19 from Shewanella baltica (strain OS155 / ATCC BAA-1091).